The following is a 350-amino-acid chain: Phosphate acyltransferase (350 aa).

It belongs to the PlsX family. In terms of assembly, homodimer. Probably interacts with PlsY.

Its subcellular location is the cytoplasm. It catalyses the reaction a fatty acyl-[ACP] + phosphate = an acyl phosphate + holo-[ACP]. Its pathway is lipid metabolism; phospholipid metabolism. In terms of biological role, catalyzes the reversible formation of acyl-phosphate (acyl-PO(4)) from acyl-[acyl-carrier-protein] (acyl-ACP). This enzyme utilizes acyl-ACP as fatty acyl donor, but not acyl-CoA. The protein is Phosphate acyltransferase of Magnetococcus marinus (strain ATCC BAA-1437 / JCM 17883 / MC-1).